Reading from the N-terminus, the 270-residue chain is Ribosomal RNA small subunit methyltransferase A (270 aa).

S-adenosyl-L-methionine is bound by residues N18, L20, G45, E66, D91, and N112.

The protein belongs to the class I-like SAM-binding methyltransferase superfamily. rRNA adenine N(6)-methyltransferase family. RsmA subfamily.

The protein resides in the cytoplasm. It carries out the reaction adenosine(1518)/adenosine(1519) in 16S rRNA + 4 S-adenosyl-L-methionine = N(6)-dimethyladenosine(1518)/N(6)-dimethyladenosine(1519) in 16S rRNA + 4 S-adenosyl-L-homocysteine + 4 H(+). Its function is as follows. Specifically dimethylates two adjacent adenosines (A1518 and A1519) in the loop of a conserved hairpin near the 3'-end of 16S rRNA in the 30S particle. May play a critical role in biogenesis of 30S subunits. The polypeptide is Ribosomal RNA small subunit methyltransferase A (Psychromonas ingrahamii (strain DSM 17664 / CCUG 51855 / 37)).